We begin with the raw amino-acid sequence, 100 residues long: Aspartyl/glutamyl-tRNA(Asn/Gln) amidotransferase subunit C (100 aa).

The protein belongs to the GatC family. In terms of assembly, heterotrimer of A, B and C subunits.

It carries out the reaction L-glutamyl-tRNA(Gln) + L-glutamine + ATP + H2O = L-glutaminyl-tRNA(Gln) + L-glutamate + ADP + phosphate + H(+). The enzyme catalyses L-aspartyl-tRNA(Asn) + L-glutamine + ATP + H2O = L-asparaginyl-tRNA(Asn) + L-glutamate + ADP + phosphate + 2 H(+). Allows the formation of correctly charged Asn-tRNA(Asn) or Gln-tRNA(Gln) through the transamidation of misacylated Asp-tRNA(Asn) or Glu-tRNA(Gln) in organisms which lack either or both of asparaginyl-tRNA or glutaminyl-tRNA synthetases. The reaction takes place in the presence of glutamine and ATP through an activated phospho-Asp-tRNA(Asn) or phospho-Glu-tRNA(Gln). The polypeptide is Aspartyl/glutamyl-tRNA(Asn/Gln) amidotransferase subunit C (Janthinobacterium sp. (strain Marseille) (Minibacterium massiliensis)).